The sequence spans 384 residues: Probable UDP-galactopyranose mutase (384 aa).

An N-terminal signal peptide occupies residues 1–19; sequence MNNKNIMIVGAGFSGVVIA. FAD contacts are provided by residues Ser-14, 33–34, Asn-41, and 60–61; these read DR and HI. Residues Asn-84, Phe-151, Thr-156, Trp-160, and Tyr-185 each coordinate UDP-alpha-D-galactose. Phe-219 provides a ligand contact to FAD. UDP-alpha-D-galactose-binding residues include Asn-270, Arg-280, and Tyr-314. An FAD-binding site is contributed by Arg-343. Residue Tyr-349 participates in UDP-alpha-D-galactose binding. 350–355 is an FAD binding site; it reads LDMDVT.

This sequence belongs to the UDP-galactopyranose/dTDP-fucopyranose mutase family. In terms of assembly, homodimer. Requires FAD as cofactor.

The enzyme catalyses UDP-alpha-D-galactose = UDP-alpha-D-galactofuranose. The protein operates within bacterial outer membrane biogenesis; LPS O-antigen biosynthesis. Catalyzes the interconversion through a 2-keto intermediate of uridine diphosphogalactopyranose (UDP-GalP) into uridine diphosphogalactofuranose (UDP-GalF). The sequence is that of Probable UDP-galactopyranose mutase (rfbD) from Klebsiella pneumoniae.